An 81-amino-acid chain; its full sequence is MKTLLLTLVVVTIVCLDLGYTLKCNKLIPIASKTCTAGKNLCYKMFMMSDLTIPVKRGCIDVCPKNSLLVKYVCCNTDRCN.

Residues 1–21 form the signal peptide; the sequence is MKTLLLTLVVVTIVCLDLGYT. Intrachain disulfides connect Cys-24/Cys-42, Cys-35/Cys-59, Cys-63/Cys-74, and Cys-75/Cys-80.

The protein belongs to the three-finger toxin family. Short-chain subfamily. Type IA cytotoxin sub-subfamily. Monomer in solution; Homodimer and oligomer in the presence of negatively charged lipids forming a pore with a size ranging between 20 and 30 Angstroms. In terms of tissue distribution, expressed by the venom gland.

It localises to the secreted. The protein resides in the target cell membrane. Shows cytolytic activity on many different cells by forming pore in lipid membranes. In vivo, increases heart rate or kills the animal by cardiac arrest. In addition, it binds to heparin with high affinity, interacts with Kv channel-interacting protein 1 (KCNIP1) in a calcium-independent manner, and binds to integrin alpha-V/beta-3 (ITGAV/ITGB3) with moderate affinity. This is Cytotoxin I-like T-15 from Naja atra (Chinese cobra).